The chain runs to 565 residues: Bicyclogermacrene synthase (565 aa).

4 residues coordinate Mg(2+): Asp317, Asp321, Asp461, and Glu469. The DDXXD motif motif lies at 317 to 321 (DDTFD).

It belongs to the terpene synthase family. The cofactor is Mg(2+).

It catalyses the reaction (2E,6E)-farnesyl diphosphate = bicyclogermacrene + diphosphate. It participates in secondary metabolite biosynthesis; terpenoid biosynthesis. Its function is as follows. Sesquiterpene synthase converting farnesyl diphosphate to bicyclogermacrene as the major product. This Phyla dulcis (Aztec sweet herb) protein is Bicyclogermacrene synthase.